Consider the following 161-residue polypeptide: Deoxyuridine 5'-triphosphate nucleotidohydrolase (161 aa).

Residues 80-82 (RSG), Asn93, 97-99 (TVD), and Lys107 contribute to the substrate site.

It belongs to the dUTPase family. Requires Mg(2+) as cofactor.

The enzyme catalyses dUTP + H2O = dUMP + diphosphate + H(+). Its pathway is pyrimidine metabolism; dUMP biosynthesis; dUMP from dCTP (dUTP route): step 2/2. This enzyme is involved in nucleotide metabolism: it produces dUMP, the immediate precursor of thymidine nucleotides and it decreases the intracellular concentration of dUTP so that uracil cannot be incorporated into DNA. This chain is Deoxyuridine 5'-triphosphate nucleotidohydrolase, found in Mesorhizobium japonicum (strain LMG 29417 / CECT 9101 / MAFF 303099) (Mesorhizobium loti (strain MAFF 303099)).